A 360-amino-acid chain; its full sequence is Dihydroorotate dehydrogenase (quinone) (360 aa).

FMN contacts are provided by residues A67–K71 and T91. K71 is a binding site for substrate. Position 116–120 (N116–F120) interacts with substrate. 2 residues coordinate FMN: N145 and N176. Residue N176 coordinates substrate. The active-site Nucleophile is the S179. Position 181 (N181) interacts with substrate. FMN is bound by residues K222 and S250. N251–T252 contacts substrate. FMN is bound by residues G272, G301, and Y322–S323.

Belongs to the dihydroorotate dehydrogenase family. Type 2 subfamily. Monomer. FMN is required as a cofactor.

Its subcellular location is the cell membrane. The catalysed reaction is (S)-dihydroorotate + a quinone = orotate + a quinol. Its pathway is pyrimidine metabolism; UMP biosynthesis via de novo pathway; orotate from (S)-dihydroorotate (quinone route): step 1/1. Functionally, catalyzes the conversion of dihydroorotate to orotate with quinone as electron acceptor. The polypeptide is Dihydroorotate dehydrogenase (quinone) (Deinococcus deserti (strain DSM 17065 / CIP 109153 / LMG 22923 / VCD115)).